Here is a 225-residue protein sequence, read N- to C-terminus: Chromosome partition protein MukE (225 aa).

Residues 197–225 are disordered; it reads RDGEAMPIENHLQLNDETEENQPDSGEEE. A compositionally biased stretch (acidic residues) spans 212–225; sequence DETEENQPDSGEEE.

Belongs to the MukE family. As to quaternary structure, interacts, and probably forms a ternary complex, with MukF and MukB. The complex formation is stimulated by calcium or magnesium.

The protein resides in the cytoplasm. It is found in the nucleoid. In terms of biological role, involved in chromosome condensation, segregation and cell cycle progression. May participate in facilitating chromosome segregation by condensation DNA from both sides of a centrally located replisome during cell division. Probably acts via its interaction with MukB and MukF. The chain is Chromosome partition protein MukE from Escherichia coli O157:H7.